A 970-amino-acid polypeptide reads, in one-letter code: Glycine dehydrogenase (decarboxylating) (970 aa).

Position 723 is an N6-(pyridoxal phosphate)lysine (lysine 723).

The protein belongs to the GcvP family. As to quaternary structure, the glycine cleavage system is composed of four proteins: P, T, L and H. It depends on pyridoxal 5'-phosphate as a cofactor.

It catalyses the reaction N(6)-[(R)-lipoyl]-L-lysyl-[glycine-cleavage complex H protein] + glycine + H(+) = N(6)-[(R)-S(8)-aminomethyldihydrolipoyl]-L-lysyl-[glycine-cleavage complex H protein] + CO2. Functionally, the glycine cleavage system catalyzes the degradation of glycine. The P protein binds the alpha-amino group of glycine through its pyridoxal phosphate cofactor; CO(2) is released and the remaining methylamine moiety is then transferred to the lipoamide cofactor of the H protein. The protein is Glycine dehydrogenase (decarboxylating) of Burkholderia pseudomallei (strain 1106a).